We begin with the raw amino-acid sequence, 468 residues long: Phosphomethylpyrimidine synthase (468 aa).

Residues Asn80, Met109, Tyr138, His173, 193–195 (SRG), 234–237 (DGLR), and Glu273 contribute to the substrate site. His277 serves as a coordination point for Zn(2+). Tyr300 contributes to the substrate binding site. Zn(2+) is bound at residue His341. Cys421, Cys424, and Cys429 together coordinate [4Fe-4S] cluster.

It belongs to the ThiC family. In terms of assembly, homodimer. [4Fe-4S] cluster is required as a cofactor.

It catalyses the reaction 5-amino-1-(5-phospho-beta-D-ribosyl)imidazole + S-adenosyl-L-methionine = 4-amino-2-methyl-5-(phosphooxymethyl)pyrimidine + CO + 5'-deoxyadenosine + formate + L-methionine + 3 H(+). It participates in cofactor biosynthesis; thiamine diphosphate biosynthesis. In terms of biological role, catalyzes the synthesis of the hydroxymethylpyrimidine phosphate (HMP-P) moiety of thiamine from aminoimidazole ribotide (AIR) in a radical S-adenosyl-L-methionine (SAM)-dependent reaction. The sequence is that of Phosphomethylpyrimidine synthase from Anaeromyxobacter sp. (strain Fw109-5).